Reading from the N-terminus, the 570-residue chain is Sulfite reductase [NADPH] hemoprotein beta-component (570 aa).

The [4Fe-4S] cluster site is built by C434, C440, C479, and C483. C483 is a binding site for siroheme.

The protein belongs to the nitrite and sulfite reductase 4Fe-4S domain family. Alpha(8)-beta(8). The alpha component is a flavoprotein, the beta component is a hemoprotein. The cofactor is siroheme. Requires [4Fe-4S] cluster as cofactor.

It carries out the reaction hydrogen sulfide + 3 NADP(+) + 3 H2O = sulfite + 3 NADPH + 4 H(+). Its pathway is sulfur metabolism; hydrogen sulfide biosynthesis; hydrogen sulfide from sulfite (NADPH route): step 1/1. Component of the sulfite reductase complex that catalyzes the 6-electron reduction of sulfite to sulfide. This is one of several activities required for the biosynthesis of L-cysteine from sulfate. The protein is Sulfite reductase [NADPH] hemoprotein beta-component of Enterobacter sp. (strain 638).